We begin with the raw amino-acid sequence, 214 residues long: Thymidylate kinase (214 aa).

10–17 contributes to the ATP binding site; that stretch reads GIDGCGKT.

This sequence belongs to the thymidylate kinase family.

It catalyses the reaction dTMP + ATP = dTDP + ADP. In terms of biological role, phosphorylation of dTMP to form dTDP in both de novo and salvage pathways of dTTP synthesis. The protein is Thymidylate kinase of Prochlorococcus marinus subsp. pastoris (strain CCMP1986 / NIES-2087 / MED4).